The following is a 386-amino-acid chain: Putative nickel insertion protein (386 aa).

It belongs to the LarC family.

This Dictyoglomus thermophilum (strain ATCC 35947 / DSM 3960 / H-6-12) protein is Putative nickel insertion protein.